The primary structure comprises 211 residues: Thiamine-phosphate synthase (211 aa).

Residues 37–41 (QLRIK) and asparagine 69 each bind 4-amino-2-methyl-5-(diphosphooxymethyl)pyrimidine. Mg(2+) contacts are provided by aspartate 70 and aspartate 89. Serine 108 is a binding site for 4-amino-2-methyl-5-(diphosphooxymethyl)pyrimidine. 134–136 (TQT) serves as a coordination point for 2-[(2R,5Z)-2-carboxy-4-methylthiazol-5(2H)-ylidene]ethyl phosphate. Lysine 137 is a 4-amino-2-methyl-5-(diphosphooxymethyl)pyrimidine binding site. 2-[(2R,5Z)-2-carboxy-4-methylthiazol-5(2H)-ylidene]ethyl phosphate-binding positions include glycine 166 and 186–187 (VS).

Belongs to the thiamine-phosphate synthase family. It depends on Mg(2+) as a cofactor.

The enzyme catalyses 2-[(2R,5Z)-2-carboxy-4-methylthiazol-5(2H)-ylidene]ethyl phosphate + 4-amino-2-methyl-5-(diphosphooxymethyl)pyrimidine + 2 H(+) = thiamine phosphate + CO2 + diphosphate. The catalysed reaction is 2-(2-carboxy-4-methylthiazol-5-yl)ethyl phosphate + 4-amino-2-methyl-5-(diphosphooxymethyl)pyrimidine + 2 H(+) = thiamine phosphate + CO2 + diphosphate. It carries out the reaction 4-methyl-5-(2-phosphooxyethyl)-thiazole + 4-amino-2-methyl-5-(diphosphooxymethyl)pyrimidine + H(+) = thiamine phosphate + diphosphate. Its pathway is cofactor biosynthesis; thiamine diphosphate biosynthesis; thiamine phosphate from 4-amino-2-methyl-5-diphosphomethylpyrimidine and 4-methyl-5-(2-phosphoethyl)-thiazole: step 1/1. Condenses 4-methyl-5-(beta-hydroxyethyl)thiazole monophosphate (THZ-P) and 2-methyl-4-amino-5-hydroxymethyl pyrimidine pyrophosphate (HMP-PP) to form thiamine monophosphate (TMP). The protein is Thiamine-phosphate synthase of Citrobacter koseri (strain ATCC BAA-895 / CDC 4225-83 / SGSC4696).